A 462-amino-acid polypeptide reads, in one-letter code: Glutamate--tRNA ligase (462 aa).

Positions 11–21 (PSPTGFIHLGN) match the 'HIGH' region motif. Positions 120-131 (KPRYDGTWRPEP) are enriched in basic and acidic residues. The disordered stretch occupies residues 120–140 (KPRYDGTWRPEPGKTLPPIPA). The short motif at 243-247 (KMSKR) is the 'KMSKS' region element. Lys246 serves as a coordination point for ATP.

The protein belongs to the class-I aminoacyl-tRNA synthetase family. Glutamate--tRNA ligase type 1 subfamily. Monomer.

Its subcellular location is the cytoplasm. It catalyses the reaction tRNA(Glu) + L-glutamate + ATP = L-glutamyl-tRNA(Glu) + AMP + diphosphate. Catalyzes the attachment of glutamate to tRNA(Glu) in a two-step reaction: glutamate is first activated by ATP to form Glu-AMP and then transferred to the acceptor end of tRNA(Glu). The polypeptide is Glutamate--tRNA ligase (Polaromonas sp. (strain JS666 / ATCC BAA-500)).